A 132-amino-acid polypeptide reads, in one-letter code: Small ribosomal subunit protein uS8 (132 aa).

It belongs to the universal ribosomal protein uS8 family. As to quaternary structure, part of the 30S ribosomal subunit. Contacts proteins S5 and S12.

One of the primary rRNA binding proteins, it binds directly to 16S rRNA central domain where it helps coordinate assembly of the platform of the 30S subunit. This is Small ribosomal subunit protein uS8 from Levilactobacillus brevis (strain ATCC 367 / BCRC 12310 / CIP 105137 / JCM 1170 / LMG 11437 / NCIMB 947 / NCTC 947) (Lactobacillus brevis).